We begin with the raw amino-acid sequence, 183 residues long: Adenine phosphoribosyltransferase (183 aa).

This sequence belongs to the purine/pyrimidine phosphoribosyltransferase family. In terms of assembly, homodimer.

It is found in the cytoplasm. The enzyme catalyses AMP + diphosphate = 5-phospho-alpha-D-ribose 1-diphosphate + adenine. The protein operates within purine metabolism; AMP biosynthesis via salvage pathway; AMP from adenine: step 1/1. Functionally, catalyzes a salvage reaction resulting in the formation of AMP, that is energically less costly than de novo synthesis. The chain is Adenine phosphoribosyltransferase from Shewanella sp. (strain MR-7).